A 349-amino-acid chain; its full sequence is uncharacterized protein (349 aa).

A helical membrane pass occupies residues 221–241 (AFVVWIGSGLNIIWWTGIVLL). Pro residues predominate over residues 328–339 (VASAPPAVPSQP). Positions 328–349 (VASAPPAVPSQPPEYSSVFPPV) are disordered.

The protein resides in the host membrane. This is an uncharacterized protein from Human cytomegalovirus (strain Merlin) (HHV-5).